A 214-amino-acid chain; its full sequence is GTP-binding nuclear protein GSP1/Ran (214 aa).

In terms of domain architecture, Small GTPase Ran-type spans glutamate 4 to asparagine 168. Position 15–22 (aspartate 15–threonine 22) interacts with GTP. Residues lysine 34–valine 42 are switch-I. GTP-binding positions include glycine 65, asparagine 119 to aspartate 122, and serine 147 to lysine 149. Positions glycine 65–glutamine 81 are switch-II.

Belongs to the small GTPase superfamily. Ran family. Found in a nuclear export complex with RanGTP, exportin and pre-miRNA.

It localises to the nucleus. Its function is as follows. GTP-binding protein involved in nucleocytoplasmic transport. Required for the import of protein into the nucleus and also for RNA export. Involved in chromatin condensation and control of cell cycle. The chain is GTP-binding nuclear protein GSP1/Ran (GSP1) from Eremothecium gossypii (strain ATCC 10895 / CBS 109.51 / FGSC 9923 / NRRL Y-1056) (Yeast).